A 146-amino-acid polypeptide reads, in one-letter code: Small ribosomal subunit protein uS5 (146 aa).

Positions 8 to 71 (FQEAIVKIGR…DDAFKSLVTV (64 aa)) constitute an S5 DRBM domain.

It belongs to the universal ribosomal protein uS5 family. As to quaternary structure, part of the 30S ribosomal subunit. Contacts proteins S4 and S8.

Its function is as follows. With S4 and S12 plays an important role in translational accuracy. In terms of biological role, located at the back of the 30S subunit body where it stabilizes the conformation of the head with respect to the body. The chain is Small ribosomal subunit protein uS5 from Aliarcobacter butzleri (strain RM4018) (Arcobacter butzleri).